The following is a 261-amino-acid chain: MSDILDRIIAVKRDEVAAAMRSTPLEALKLEASARDLRDFVGALRAKQAAGQPAVIAEVKKASPSKGVLREHFVPADIARSYATHGAACLSVLTDEQFFQGSVRYLEEARAACTLPVLRKDFIVDAYQILEARAMGADAILLIAAALDTPLMQELEAYAHSLGLAVLVEVHDRNEMEQALTLKTPLVGINNRNLRTFETTIQTTLDMLDMVPADRMVVTESGILSRADVDTMRAANVNAFLVGEAFMRADEPGAALARMFF.

Belongs to the TrpC family.

The enzyme catalyses 1-(2-carboxyphenylamino)-1-deoxy-D-ribulose 5-phosphate + H(+) = (1S,2R)-1-C-(indol-3-yl)glycerol 3-phosphate + CO2 + H2O. It functions in the pathway amino-acid biosynthesis; L-tryptophan biosynthesis; L-tryptophan from chorismate: step 4/5. In Burkholderia vietnamiensis (strain G4 / LMG 22486) (Burkholderia cepacia (strain R1808)), this protein is Indole-3-glycerol phosphate synthase.